The chain runs to 511 residues: Pickpocket protein 19 (511 aa).

Helical transmembrane passes span Leu59 to Met79 and Gly471 to Leu491.

It belongs to the amiloride-sensitive sodium channel (TC 1.A.6) family. In terms of tissue distribution, expressed in the tracheal system. Expressed in the taste-sensing terminal organ of the larval head. In adults, expressed in hairs on the tibia, femur and wing margin, but not in hairs on the tarsi of the leg.

It localises to the membrane. Its function is as follows. Part of a complex that plays a role in tracheal liquid clearance. In both larvae and adults, contributes to the behavioral response to salt. Probable role in sodium transport. This chain is Pickpocket protein 19 (ppk19), found in Drosophila melanogaster (Fruit fly).